The chain runs to 246 residues: 5-oxoprolinase subunit A (246 aa).

Belongs to the LamB/PxpA family. Forms a complex composed of PxpA, PxpB and PxpC.

The enzyme catalyses 5-oxo-L-proline + ATP + 2 H2O = L-glutamate + ADP + phosphate + H(+). Functionally, catalyzes the cleavage of 5-oxoproline to form L-glutamate coupled to the hydrolysis of ATP to ADP and inorganic phosphate. This Cupriavidus necator (strain ATCC 17699 / DSM 428 / KCTC 22496 / NCIMB 10442 / H16 / Stanier 337) (Ralstonia eutropha) protein is 5-oxoprolinase subunit A.